The primary structure comprises 86 residues: Small ribosomal subunit protein uS15c (86 aa).

Belongs to the universal ribosomal protein uS15 family. Part of the 30S ribosomal subunit.

The protein resides in the plastid. The protein localises to the chloroplast. This Cryptomeria japonica (Japanese cedar) protein is Small ribosomal subunit protein uS15c (rps15).